A 1427-amino-acid chain; its full sequence is DNA-directed RNA polymerase subunit beta' (1427 aa).

The Zn(2+) site is built by Cys-70, Cys-72, Cys-85, and Cys-88. Mg(2+) contacts are provided by Asp-461, Asp-463, and Asp-465. Residues Cys-809, Cys-882, Cys-889, and Cys-892 each contribute to the Zn(2+) site. Residues 1394-1427 (EAAIGDDPLGKVQGEDFTTDDVMVEERPEGASEE) are disordered. Positions 1417-1427 (VEERPEGASEE) are enriched in basic and acidic residues.

This sequence belongs to the RNA polymerase beta' chain family. As to quaternary structure, the RNAP catalytic core consists of 2 alpha, 1 beta, 1 beta' and 1 omega subunit. When a sigma factor is associated with the core the holoenzyme is formed, which can initiate transcription. It depends on Mg(2+) as a cofactor. The cofactor is Zn(2+).

The enzyme catalyses RNA(n) + a ribonucleoside 5'-triphosphate = RNA(n+1) + diphosphate. In terms of biological role, DNA-dependent RNA polymerase catalyzes the transcription of DNA into RNA using the four ribonucleoside triphosphates as substrates. This chain is DNA-directed RNA polymerase subunit beta', found in Sphingopyxis alaskensis (strain DSM 13593 / LMG 18877 / RB2256) (Sphingomonas alaskensis).